The following is a 1555-amino-acid chain: Regulating synaptic membrane exocytosis protein 2 (1555 aa).

The disordered stretch occupies residues 1–35 (MSAPLGPRGRPAPTPAASQPPPQPEMPDLSHLTEE). The segment covering 10 to 25 (RPAPTPAASQPPPQPE) has biased composition (pro residues). The region spanning 26-154 (MPDLSHLTEE…TKSGAWFYNS (129 aa)) is the RabBD domain. An FYVE-type zinc finger spans residues 86-142 (KGDAPTCGICHKTKFADGCGHNCSYCQTKFCARCGGRVSLRSNKVMWVCNLCRKQQE). Residues Cys92, Cys95, Cys108, Cys111, Cys116, Cys119, Cys134, and Cys137 each coordinate Zn(2+). Residues 154–163 (SGSNTPQQPD) are compositionally biased toward polar residues. Residues 154–530 (SGSNTPQQPD…STPEYTSCDD (377 aa)) are disordered. The segment covering 170–185 (LRSEEAPQEKKAKLHE) has biased composition (basic and acidic residues). The span at 259-268 (YVPSDSTMPR) shows a compositional bias: polar residues. 4 stretches are compositionally biased toward basic and acidic residues: residues 287-298 (EPDHLNYRDSNR), 317-335 (RDEY…RYRS), 351-370 (EQMR…RHSD), and 379-403 (EDSR…RRAA). A Phosphoserine modification is found at Ser369. Over residues 418–432 (AQGQSSYPQRTTNHS) the composition is skewed to polar residues. The segment covering 444-461 (DRPELRRADSLRKQHHLD) has biased composition (basic and acidic residues). A compositionally biased stretch (polar residues) spans 479 to 490 (RNDSLSSDQSES). Residues 497-506 (RPHKSKKGGK) show a composition bias toward basic residues. A PDZ domain is found at 590 to 676 (DGSVPRDSGA…EPQVELVVSR (87 aa)). At Thr611 the chain carries Phosphothreonine. Residues 682–716 (PRIPDSTHAQLESSSSSFESQKMDRPSISVTSPMS) are disordered. Ser713 and Ser716 each carry phosphoserine. One can recognise a C2 1 domain in the interval 743–866 (FVPRVQIKLW…ALLDDEPHWY (124 aa)). Disordered stretches follow at residues 877-913 (PLPH…VSDY), 935-1145 (STLS…KRNS), 1180-1207 (YRSG…DVSA), 1268-1288 (LEKN…TSGK), and 1307-1332 (KSRS…QRST). A compositionally biased stretch (polar residues) spans 935–953 (STLSVPEQVMSSNHCSPSG). 2 stretches are compositionally biased toward basic and acidic residues: residues 996–1014 (RMDR…RDSH) and 1025–1071 (QTSE…ERAD). Low complexity predominate over residues 1092 to 1114 (ALSRSHPRTGSVQTSPSSTPVTG). Ser1106 is subject to Phosphoserine. Basic and acidic residues-rich tracts occupy residues 1128–1141 (TLER…DSTR) and 1180–1190 (YRSGWDPHRGA). Phosphoserine is present on residues Ser1200 and Ser1276. The region spanning 1401 to 1519 (AMGDIQVGMM…ELSNMVIGWF (119 aa)) is the C2 2 domain. Ser1540 and Ser1543 each carry phosphoserine.

As to quaternary structure, heterodimer with PCLO. Part of a ternary complex involving PCLO and EPAC2. Interacts with RAB3C, RAB3D and RAB26. Binds RAB3A and RAB3B that have been activated by GTP-binding. Interacts with TSPOAP1 and RIMBP2. Interacts with PPFIA3 and PPFIA4. Interacts via its zinc finger with the first C2 domain of UNC13A. Forms a complex consisting of UNC13A, RIMS2 and RAB3A. As to expression, highly expressed in hippocampus, brain cortex, cerebellum and olfactory bulb. Detected at intermediate levels in midbrain, hindbrain and spinal cord, and at low levels in testis.

It is found in the cell membrane. It localises to the synapse. The protein resides in the presynaptic cell membrane. In terms of biological role, rab effector involved in exocytosis. May act as scaffold protein. Plays a role in dendrite formation by melanocytes. The sequence is that of Regulating synaptic membrane exocytosis protein 2 (Rims2) from Rattus norvegicus (Rat).